A 345-amino-acid chain; its full sequence is Methylthioribose-1-phosphate isomerase 2 (345 aa).

Residues 47 to 49 (RGA), R88, and Q194 each bind substrate. The active-site Proton donor is D235. Residue 245 to 246 (NK) coordinates substrate.

The protein belongs to the eIF-2B alpha/beta/delta subunits family. MtnA subfamily.

It catalyses the reaction 5-(methylsulfanyl)-alpha-D-ribose 1-phosphate = 5-(methylsulfanyl)-D-ribulose 1-phosphate. The protein operates within amino-acid biosynthesis; L-methionine biosynthesis via salvage pathway; L-methionine from S-methyl-5-thio-alpha-D-ribose 1-phosphate: step 1/6. Its function is as follows. Catalyzes the interconversion of methylthioribose-1-phosphate (MTR-1-P) into methylthioribulose-1-phosphate (MTRu-1-P). This is Methylthioribose-1-phosphate isomerase 2 from Pseudothermotoga lettingae (strain ATCC BAA-301 / DSM 14385 / NBRC 107922 / TMO) (Thermotoga lettingae).